The sequence spans 525 residues: ALBINO3-like protein 2, chloroplastic (525 aa).

4 consecutive transmembrane segments (helical) span residues 99 to 119, 167 to 187, 217 to 237, and 262 to 282; these read WMIIASSTVAVRLALLPLLIL, LWFFPYLSVQLPCFFLLMASI, FGPVFPILIATFHYINIQISF, and ILSVPLFFVGYAIPQGSLVYW. TPR repeat units follow at residues 346–379, 380–413, 425–458, and 467–500; these read PEELLSLSVQVLSKGDKETSIQLLRLALEKDPGY, VRGLVLMGQALLQKTQLSEATEYLELAISKLLDE, MLASQWAGAAYVQQGKLKSGIIHLERVAKLREPG, and FEALLLLSSALYKEGQSDEAAKILRVVVDHNPAY.

It belongs to the OXA1/ALB3/YidC (TC 2.A.9.2) family.

Its subcellular location is the plastid. The protein resides in the chloroplast thylakoid membrane. Probably required for the insertion of integral membrane proteins into the chloroplast thylakoid membranes. This chain is ALBINO3-like protein 2, chloroplastic (ALB3L2), found in Arabidopsis thaliana (Mouse-ear cress).